Reading from the N-terminus, the 520-residue chain is Ribonuclease Y (520 aa).

Residues 5-25 form a helical membrane-spanning segment; that stretch reads ITIISSLLFLIVGLVVGSLIF. Residues 70 to 127 are disordered; it reads RTEIENELRGRRTETQKAENRLLQREENLDRKDTSLSKREATLERKEESISKRQQQIE. A KH domain is found at 210–273; that stretch reads TVSVVTLPND…EIARIALEKL (64 aa). The HD domain maps to 336-429; that stretch reads VLNHSLEVSK…VAAADALSAA (94 aa).

It belongs to the RNase Y family.

It is found in the cell membrane. Endoribonuclease that initiates mRNA decay. This chain is Ribonuclease Y, found in Listeria welshimeri serovar 6b (strain ATCC 35897 / DSM 20650 / CCUG 15529 / CIP 8149 / NCTC 11857 / SLCC 5334 / V8).